Consider the following 29-residue polypeptide: uncharacterized protein (29 aa).

This is an uncharacterized protein from Haloarcula hispanica (His1V).